Reading from the N-terminus, the 314-residue chain is Dioxygenase easH (314 aa).

Fe cation-binding residues include His141, Asp143, and His217.

It belongs to the PhyH family. As to quaternary structure, homodimer. It depends on Fe cation as a cofactor.

It participates in alkaloid biosynthesis; ergot alkaloid biosynthesis. Dioxygenase; part of the gene cluster that mediates the biosynthesis of fungal ergot alkaloid. DmaW catalyzes the first step of ergot alkaloid biosynthesis by condensing dimethylallyl diphosphate (DMAP) and tryptophan to form 4-dimethylallyl-L-tryptophan. The second step is catalyzed by the methyltransferase easF that methylates 4-dimethylallyl-L-tryptophan in the presence of S-adenosyl-L-methionine, resulting in the formation of 4-dimethylallyl-L-abrine. The catalase easC and the FAD-dependent oxidoreductase easE then transform 4-dimethylallyl-L-abrine to chanoclavine-I which is further oxidized by easD in the presence of NAD(+), resulting in the formation of chanoclavine-I aldehyde. Agroclavine dehydrogenase easG then mediates the conversion of chanoclavine-I aldehyde to agroclavine via a non-enzymatic adduct reaction: the substrate is an iminium intermediate that is formed spontaneously from chanoclavine-I aldehyde in the presence of glutathione. The presence of easA is not required to complete this reaction. Further conversion of agroclavine to paspalic acid is a two-step process involving oxidation of agroclavine to elymoclavine and of elymoclavine to paspalic acid, the second step being performed by the elymoclavine oxidase cloA. Paspalic acid is then further converted to D-lysergic acid. Ergopeptines are assembled from D-lysergic acid and three different amino acids by the D-lysergyl-peptide-synthetases composed each of a monomudular and a trimodular nonribosomal peptide synthetase subunit. LpsB and lpsC encode the monomodular subunits responsible for D-lysergic acid activation and incorporation into the ergopeptine backbone. LpsA1 and A2 subunits encode the trimodular nonribosomal peptide synthetase assembling the tripeptide portion of ergopeptines. LpsA1 is responsible for formation of the major ergopeptine, ergotamine, and lpsA2 for alpha-ergocryptine, the minor ergopeptine of the total alkaloid mixture elaborated by C.purpurea. D-lysergyl-tripeptides are assembled by the nonribosomal peptide synthetases and released as N-(D-lysergyl-aminoacyl)-lactams. Cyclolization of the D-lysergyl-tripeptides is performed by the Fe(2+)/2-ketoglutarate-dependent dioxygenase easH which introduces a hydroxyl group into N-(D-lysergyl-aminoacyl)-lactam at alpha-C of the aminoacyl residue followed by spontaneous condensation with the terminal lactam carbonyl group. This is Dioxygenase easH from Claviceps purpurea (strain 20.1) (Ergot fungus).